A 375-amino-acid polypeptide reads, in one-letter code: Chaperone protein DnaJ (375 aa).

Residues 5–70 (DYYEVLGVSR…EKRARYDRFG (66 aa)) enclose the J domain. A CR-type zinc finger spans residues 136–214 (GDEVTLRIPK…CRGAGQVQDI (79 aa)). Zn(2+) contacts are provided by C149, C152, C166, C169, C188, C191, C202, and C205. CXXCXGXG motif repeat units follow at residues 149–156 (CPDCSGSG), 166–173 (CPQCGGSG), 188–195 (CSACRGEG), and 202–209 (CPRCRGAG).

The protein belongs to the DnaJ family. Homodimer. Zn(2+) is required as a cofactor.

The protein localises to the cytoplasm. Functionally, participates actively in the response to hyperosmotic and heat shock by preventing the aggregation of stress-denatured proteins and by disaggregating proteins, also in an autonomous, DnaK-independent fashion. Unfolded proteins bind initially to DnaJ; upon interaction with the DnaJ-bound protein, DnaK hydrolyzes its bound ATP, resulting in the formation of a stable complex. GrpE releases ADP from DnaK; ATP binding to DnaK triggers the release of the substrate protein, thus completing the reaction cycle. Several rounds of ATP-dependent interactions between DnaJ, DnaK and GrpE are required for fully efficient folding. Also involved, together with DnaK and GrpE, in the DNA replication of plasmids through activation of initiation proteins. The protein is Chaperone protein DnaJ of Oleidesulfovibrio alaskensis (strain ATCC BAA-1058 / DSM 17464 / G20) (Desulfovibrio alaskensis).